The sequence spans 236 residues: Phosphoribosylaminoimidazole-succinocarboxamide synthase (236 aa).

It belongs to the SAICAR synthetase family.

The catalysed reaction is 5-amino-1-(5-phospho-D-ribosyl)imidazole-4-carboxylate + L-aspartate + ATP = (2S)-2-[5-amino-1-(5-phospho-beta-D-ribosyl)imidazole-4-carboxamido]succinate + ADP + phosphate + 2 H(+). It participates in purine metabolism; IMP biosynthesis via de novo pathway; 5-amino-1-(5-phospho-D-ribosyl)imidazole-4-carboxamide from 5-amino-1-(5-phospho-D-ribosyl)imidazole-4-carboxylate: step 1/2. In Campylobacter jejuni subsp. jejuni serotype O:2 (strain ATCC 700819 / NCTC 11168), this protein is Phosphoribosylaminoimidazole-succinocarboxamide synthase.